The chain runs to 498 residues: Death-associated inhibitor of apoptosis 2 (498 aa).

3 BIR repeats span residues 12–77 (RLAT…SMVL), 116–180 (RLVT…PRVQ), and 215–280 (RLRT…QFVL). Residues Cys249, Cys252, His269, and Cys276 each contribute to the Zn(2+) site. The segment at 451–486 (CKVCLDEEVGVVFLPCGHLATCNQCAPSVANCPMCR) adopts an RING-type zinc-finger fold.

The protein belongs to the IAP family. Interacts with the caspase Strica. Interacts (via BIR2 domain) with rpr and grim. Interacts (via the BIR2 and BIR3 domains) with hid. Interacts (via BIR3 domain) with Drice. Interacts with Dredd; likely to bind Dredd simultaneously with Fadd to form a trimeric complex. Post-translationally, caspase-dependent cleavage is required for suppression of Drice-mediated cell death. In terms of tissue distribution, expressed in both principal and stellar cells of the Malphigian tubules.

Its subcellular location is the nucleus. It localises to the cytoplasm. Its function is as follows. Required for activation of NF-kappaB transcription factors in the immune deficiency (Imd) signaling cascade which is essential for innate immune responses upon infection by Gram-negative bacteria. Promotes cytoplasmic cleavage of Rel and its translocation to the nucleus where it drives expression of antimicrobial peptides. Binds, polyubiquitinates and activates Dredd which is required for Rel-mediated induction of antimicrobial peptides. Anti-apoptotic protein which binds, ubiquitinates and inactivates the effector caspase Drice. Suppresses rpr and hid-dependent cell death in the eye. However, has also been shown to have little, if any, role in the regulation of the canonical caspase-dependent apoptosis pathway. Plays a role in regulating the expression of ion channels. The protein is Death-associated inhibitor of apoptosis 2 (Diap2) of Drosophila melanogaster (Fruit fly).